A 930-amino-acid polypeptide reads, in one-letter code: Isoleucine--tRNA ligase (930 aa).

The 'HIGH' region motif lies at 57 to 67 (PYANGHLHLGH). Glu-555 is a binding site for L-isoleucyl-5'-AMP. Positions 596-600 (KMSKS) match the 'KMSKS' region motif. Lys-599 is a binding site for ATP. Zn(2+) contacts are provided by Cys-896, Cys-899, Cys-916, and Cys-919.

The protein belongs to the class-I aminoacyl-tRNA synthetase family. IleS type 1 subfamily. Monomer. It depends on Zn(2+) as a cofactor.

The protein resides in the cytoplasm. The catalysed reaction is tRNA(Ile) + L-isoleucine + ATP = L-isoleucyl-tRNA(Ile) + AMP + diphosphate. Catalyzes the attachment of isoleucine to tRNA(Ile). As IleRS can inadvertently accommodate and process structurally similar amino acids such as valine, to avoid such errors it has two additional distinct tRNA(Ile)-dependent editing activities. One activity is designated as 'pretransfer' editing and involves the hydrolysis of activated Val-AMP. The other activity is designated 'posttransfer' editing and involves deacylation of mischarged Val-tRNA(Ile). The protein is Isoleucine--tRNA ligase of Moorella thermoacetica (strain ATCC 39073 / JCM 9320).